The following is a 96-amino-acid chain: MKSSLRFLGQELVVEGVIPADNAFNEAVYDEFIKIFGTDKKFGIFPSENFSKPEQTESIFQGVVTGKFESEAPVKIEVYIEDSLVASVAAFISFRK.

This is an uncharacterized protein from Enterobacteria phage T4 (Bacteriophage T4).